A 205-amino-acid chain; its full sequence is Adenylyl-sulfate kinase (205 aa).

ATP is bound at residue 31-38; sequence GLSGAGKS. Ser-105 functions as the Phosphoserine intermediate in the catalytic mechanism.

This sequence belongs to the APS kinase family.

It carries out the reaction adenosine 5'-phosphosulfate + ATP = 3'-phosphoadenylyl sulfate + ADP + H(+). It participates in sulfur metabolism; hydrogen sulfide biosynthesis; sulfite from sulfate: step 2/3. In terms of biological role, catalyzes the synthesis of activated sulfate. The protein is Adenylyl-sulfate kinase of Shewanella oneidensis (strain ATCC 700550 / JCM 31522 / CIP 106686 / LMG 19005 / NCIMB 14063 / MR-1).